Reading from the N-terminus, the 320-residue chain is uncharacterized protein (320 aa).

An N-terminal signal peptide occupies residues 1–23 (MKLNLRFPSYFLPVVAASAFLVS). Cys24 carries the N-palmitoyl cysteine lipid modification. Cys24 carries the S-diacylglycerol cysteine lipid modification. A disordered region spans residues 160–181 (KNHEHGHTHKNGETHEHDHDHH).

It localises to the cell membrane. This is an uncharacterized protein from Mycoplasma pneumoniae (strain ATCC 29342 / M129 / Subtype 1) (Mycoplasmoides pneumoniae).